We begin with the raw amino-acid sequence, 178 residues long: Ribonuclease M5 (178 aa).

In terms of domain architecture, Toprim spans 10-94 (DGVIVCEGKT…YVDMNARLKN (85 aa)). Mg(2+)-binding residues include glutamate 16, aspartate 62, and aspartate 64.

It belongs to the ribonuclease M5 family. It depends on Mg(2+) as a cofactor.

Its subcellular location is the cytoplasm. The catalysed reaction is Endonucleolytic cleavage of RNA, removing 21 and 42 nucleotides, respectively, from the 5'- and 3'-termini of a 5S-rRNA precursor.. Functionally, required for correct processing of both the 5' and 3' ends of 5S rRNA precursor. Cleaves both sides of a double-stranded region yielding mature 5S rRNA in one step. The sequence is that of Ribonuclease M5 (rnmV) from Mycoplasma genitalium (strain ATCC 33530 / DSM 19775 / NCTC 10195 / G37) (Mycoplasmoides genitalium).